Here is a 279-residue protein sequence, read N- to C-terminus: tRNA dimethylallyltransferase (279 aa).

10-17 provides a ligand contact to ATP; the sequence is GPTASGKS. 12-17 contacts substrate; sequence TASGKS.

This sequence belongs to the IPP transferase family. Monomer. Mg(2+) is required as a cofactor.

The catalysed reaction is adenosine(37) in tRNA + dimethylallyl diphosphate = N(6)-dimethylallyladenosine(37) in tRNA + diphosphate. Catalyzes the transfer of a dimethylallyl group onto the adenine at position 37 in tRNAs that read codons beginning with uridine, leading to the formation of N6-(dimethylallyl)adenosine (i(6)A). This Roseobacter denitrificans (strain ATCC 33942 / OCh 114) (Erythrobacter sp. (strain OCh 114)) protein is tRNA dimethylallyltransferase.